The following is a 154-amino-acid chain: Myoglobin (154 aa).

The 147-residue stretch at 2–148 folds into the Globin domain; that stretch reads VLSDAEWQLV…FRKDIAAKYK (147 aa). S4 carries the post-translational modification Phosphoserine. H65 serves as a coordination point for nitrite. H65 is an O2 binding site. A Phosphothreonine modification is found at T68. H94 is a binding site for heme b.

This sequence belongs to the globin family. As to quaternary structure, monomeric.

It is found in the cytoplasm. Its subcellular location is the sarcoplasm. The catalysed reaction is Fe(III)-heme b-[protein] + nitric oxide + H2O = Fe(II)-heme b-[protein] + nitrite + 2 H(+). It catalyses the reaction H2O2 + AH2 = A + 2 H2O. Monomeric heme protein which primary function is to store oxygen and facilitate its diffusion within muscle tissues. Reversibly binds oxygen through a pentacoordinated heme iron and enables its timely and efficient release as needed during periods of heightened demand. Depending on the oxidative conditions of tissues and cells, and in addition to its ability to bind oxygen, it also has a nitrite reductase activity whereby it regulates the production of bioactive nitric oxide. Under stress conditions, like hypoxia and anoxia, it also protects cells against reactive oxygen species thanks to its pseudoperoxidase activity. The sequence is that of Myoglobin (MB) from Eschrichtius robustus (California gray whale).